Here is a 548-residue protein sequence, read N- to C-terminus: GLC7-interacting protein 2 (548 aa).

Positions 1–23 (MYIKAEQKPQQFERKNEKLDRNK) are enriched in basic and acidic residues. Disordered regions lie at residues 1–54 (MYIK…STEE) and 118–143 (VESL…STVP). Ser-51 carries the post-translational modification Phosphoserine. Phosphothreonine is present on Thr-52. Ser-155 bears the Phosphoserine mark. A disordered region spans residues 191-212 (RSKSLPTTPGIRSGNGVQARDG). 2 positions are modified to phosphoserine: Ser-221 and Ser-238. The interval 293–346 (FAHPAKISNPNNGKGTNNTKLRKSKRFQNLLKNRTDMPPSKSNKKFVNGGGAHE) is disordered. Residues 419-534 (HNGNDCNGVA…NNNGNNYKVD (116 aa)) enclose the CBM21 domain.

Interacts with phosphatase 1 (GLC7).

This Saccharomyces cerevisiae (strain ATCC 204508 / S288c) (Baker's yeast) protein is GLC7-interacting protein 2 (GIP2).